Consider the following 627-residue polypeptide: Membrane protein insertase YidC (627 aa).

The next 6 membrane-spanning stretches (helical) occupy residues 3–23 (KNTVIGLVLIGLVIFGFSWLN), 376–396 (WGLIILLLTLGIKLLISPLAY), 450–470 (LPMLLQFPFLIAMYMYFPTTI), 502–522 (FYGNHVSLFCLLMSISNILYI), 534–554 (EGMAMLKWMPYITTVMFLFFF), and 558–578 (ASGLCYYYFLSSIITVIQYMS).

It belongs to the OXA1/ALB3/YidC family. Type 1 subfamily. Interacts with the Sec translocase complex via SecD. Specifically interacts with transmembrane segments of nascent integral membrane proteins during membrane integration.

The protein localises to the cell inner membrane. Functionally, required for the insertion and/or proper folding and/or complex formation of integral membrane proteins into the membrane. Involved in integration of membrane proteins that insert both dependently and independently of the Sec translocase complex, as well as at least some lipoproteins. Aids folding of multispanning membrane proteins. This is Membrane protein insertase YidC from Porphyromonas gingivalis (strain ATCC 33277 / DSM 20709 / CIP 103683 / JCM 12257 / NCTC 11834 / 2561).